We begin with the raw amino-acid sequence, 154 residues long: Transcriptional repressor NrdR (154 aa).

The segment at 3–34 is a zinc-finger region; that stretch reads CPFCRHPDSRVVDSRETDEGQAIRRRRSCPEC. One can recognise an ATP-cone domain in the interval 46–136; sequence LAVVKRSGVT…VYRSFSSAED (91 aa).

Belongs to the NrdR family. The cofactor is Zn(2+).

In terms of biological role, negatively regulates transcription of bacterial ribonucleotide reductase nrd genes and operons by binding to NrdR-boxes. The polypeptide is Transcriptional repressor NrdR (Mycolicibacterium vanbaalenii (strain DSM 7251 / JCM 13017 / BCRC 16820 / KCTC 9966 / NRRL B-24157 / PYR-1) (Mycobacterium vanbaalenii)).